The following is a 462-amino-acid chain: NADH-quinone oxidoreductase subunit N 1 (462 aa).

Helical transmembrane passes span 4 to 24 (FVVAYFPHLCLAFGGLLVLCL), 32 to 52 (AGFYPATAALFAALPGLWAVA), 60 to 80 (IACFYAGLLSVIALATIALLA), 88 to 108 (FAGDALYGLLLWSALGMLLLA), 113 to 133 (WIMLAVGLELASLCLYALIAA), 148 to 168 (FLPGAMALAVLLFGMALIYAA), 178 to 198 (LAAPGPLTAAGLALVLVGVGF), 220 to 240 (VAAFLSSGSKAAAAAALLHVC), 251 to 271 (LWPALAVGAGLTMAVGNLGAV), 279 to 299 (LLAYSSIAQMGYILMAAMAVN), 307 to 327 (LFYLAAFALMDLAAFGAVGAL), 351 to 371 (AGVLAIGLASLAGLPPTAGFV), 374 to 394 (FLVFGAALSAGYVGLAAFGII), 416 to 436 (LIAHPAAVYAAGPAGTLALGV), and 439 to 459 (AGLVGLGLFPQTLLGAIAALF).

Belongs to the complex I subunit 2 family. As to quaternary structure, NDH-1 is composed of 14 different subunits. Subunits NuoA, H, J, K, L, M, N constitute the membrane sector of the complex.

Its subcellular location is the cell inner membrane. The catalysed reaction is a quinone + NADH + 5 H(+)(in) = a quinol + NAD(+) + 4 H(+)(out). NDH-1 shuttles electrons from NADH, via FMN and iron-sulfur (Fe-S) centers, to quinones in the respiratory chain. The immediate electron acceptor for the enzyme in this species is believed to be ubiquinone. Couples the redox reaction to proton translocation (for every two electrons transferred, four hydrogen ions are translocated across the cytoplasmic membrane), and thus conserves the redox energy in a proton gradient. In Solidesulfovibrio magneticus (strain ATCC 700980 / DSM 13731 / RS-1) (Desulfovibrio magneticus), this protein is NADH-quinone oxidoreductase subunit N 1.